Here is a 98-residue protein sequence, read N- to C-terminus: NADH-ubiquinone oxidoreductase chain 4L (98 aa).

3 consecutive transmembrane segments (helical) span residues 1 to 21 (MSLVYMNIMTAFMVSLAGLLM), 29 to 49 (SLLCLEGMMLSLFVLATLTIL), and 61 to 81 (IILLVFGACEAALGLSLLVMV).

Belongs to the complex I subunit 4L family. In terms of assembly, core subunit of respiratory chain NADH dehydrogenase (Complex I) which is composed of 45 different subunits.

The protein localises to the mitochondrion inner membrane. It carries out the reaction a ubiquinone + NADH + 5 H(+)(in) = a ubiquinol + NAD(+) + 4 H(+)(out). Core subunit of the mitochondrial membrane respiratory chain NADH dehydrogenase (Complex I) which catalyzes electron transfer from NADH through the respiratory chain, using ubiquinone as an electron acceptor. Part of the enzyme membrane arm which is embedded in the lipid bilayer and involved in proton translocation. This chain is NADH-ubiquinone oxidoreductase chain 4L (MT-ND4L), found in Muntiacus vuquangensis (Giant muntjac).